A 354-amino-acid chain; its full sequence is 4-hydroxy-3-methylbut-2-en-1-yl diphosphate synthase (flavodoxin) (354 aa).

[4Fe-4S] cluster contacts are provided by C262, C265, C297, and E304.

It belongs to the IspG family. Requires [4Fe-4S] cluster as cofactor.

It catalyses the reaction (2E)-4-hydroxy-3-methylbut-2-enyl diphosphate + oxidized [flavodoxin] + H2O + 2 H(+) = 2-C-methyl-D-erythritol 2,4-cyclic diphosphate + reduced [flavodoxin]. The protein operates within isoprenoid biosynthesis; isopentenyl diphosphate biosynthesis via DXP pathway; isopentenyl diphosphate from 1-deoxy-D-xylulose 5-phosphate: step 5/6. Its function is as follows. Converts 2C-methyl-D-erythritol 2,4-cyclodiphosphate (ME-2,4cPP) into 1-hydroxy-2-methyl-2-(E)-butenyl 4-diphosphate. In Helicobacter hepaticus (strain ATCC 51449 / 3B1), this protein is 4-hydroxy-3-methylbut-2-en-1-yl diphosphate synthase (flavodoxin).